We begin with the raw amino-acid sequence, 412 residues long: Gamma-glutamyl phosphate reductase (412 aa).

Belongs to the gamma-glutamyl phosphate reductase family.

Its subcellular location is the cytoplasm. The catalysed reaction is L-glutamate 5-semialdehyde + phosphate + NADP(+) = L-glutamyl 5-phosphate + NADPH + H(+). It functions in the pathway amino-acid biosynthesis; L-proline biosynthesis; L-glutamate 5-semialdehyde from L-glutamate: step 2/2. Functionally, catalyzes the NADPH-dependent reduction of L-glutamate 5-phosphate into L-glutamate 5-semialdehyde and phosphate. The product spontaneously undergoes cyclization to form 1-pyrroline-5-carboxylate. The sequence is that of Gamma-glutamyl phosphate reductase from Actinobacillus pleuropneumoniae serotype 7 (strain AP76).